A 24-amino-acid polypeptide reads, in one-letter code: Pyruvate kinase (24 aa).

Belongs to the pyruvate kinase family. Homotetramer. The cofactor is Mg(2+). K(+) is required as a cofactor.

The catalysed reaction is pyruvate + ATP = phosphoenolpyruvate + ADP + H(+). Its pathway is carbohydrate degradation; glycolysis; pyruvate from D-glyceraldehyde 3-phosphate: step 5/5. In Clostridium pasteurianum, this protein is Pyruvate kinase (pyk).